Consider the following 101-residue polypeptide: NADH-quinone oxidoreductase subunit K (101 aa).

3 helical membrane passes run 4 to 24 (LAHFLVLGAILFAISIVGIFL), 30 to 50 (IVLLMAIELMLLAVNMNFVAF), and 61 to 81 (VFVFFILTVAAAESAIGLAIL).

It belongs to the complex I subunit 4L family. NDH-1 is composed of 14 different subunits. Subunits NuoA, H, J, K, L, M, N constitute the membrane sector of the complex.

It localises to the cell inner membrane. It catalyses the reaction a quinone + NADH + 5 H(+)(in) = a quinol + NAD(+) + 4 H(+)(out). In terms of biological role, NDH-1 shuttles electrons from NADH, via FMN and iron-sulfur (Fe-S) centers, to quinones in the respiratory chain. The immediate electron acceptor for the enzyme in this species is believed to be ubiquinone. Couples the redox reaction to proton translocation (for every two electrons transferred, four hydrogen ions are translocated across the cytoplasmic membrane), and thus conserves the redox energy in a proton gradient. The polypeptide is NADH-quinone oxidoreductase subunit K (Cupriavidus pinatubonensis (strain JMP 134 / LMG 1197) (Cupriavidus necator (strain JMP 134))).